The sequence spans 206 residues: Proteasome subunit beta 2 (206 aa).

A propeptide spans 1-7 (MREAVSK) (removed in mature form; by autocatalysis). The active-site Nucleophile is Thr8.

This sequence belongs to the peptidase T1B family. The 20S proteasome core is composed of 14 alpha and 14 beta subunits that assemble into four stacked heptameric rings, resulting in a barrel-shaped structure. The two inner rings, each composed of seven catalytic beta subunits, are sandwiched by two outer rings, each composed of seven alpha subunits. The catalytic chamber with the active sites is on the inside of the barrel. Has a gated structure, the ends of the cylinder being occluded by the N-termini of the alpha-subunits. Is capped at one or both ends by the proteasome regulatory ATPase, PAN.

The protein resides in the cytoplasm. It catalyses the reaction Cleavage of peptide bonds with very broad specificity.. Its activity is regulated as follows. The formation of the proteasomal ATPase PAN-20S proteasome complex, via the docking of the C-termini of PAN into the intersubunit pockets in the alpha-rings, triggers opening of the gate for substrate entry. Interconversion between the open-gate and close-gate conformations leads to a dynamic regulation of the 20S proteasome proteolysis activity. Its function is as follows. Component of the proteasome core, a large protease complex with broad specificity involved in protein degradation. This Desulfurococcus amylolyticus (strain DSM 18924 / JCM 16383 / VKM B-2413 / 1221n) (Desulfurococcus kamchatkensis) protein is Proteasome subunit beta 2.